Consider the following 177-residue polypeptide: Nucleoside triphosphate/diphosphate phosphatase (177 aa).

Arg-23 functions as the Proton donor in the catalytic mechanism. Mg(2+) contacts are provided by Asn-87, Asp-103, Asp-105, Asp-107, Asp-120, and Glu-123.

Belongs to the Ntdp family. Requires Mg(2+) as cofactor.

It carries out the reaction a ribonucleoside 5'-triphosphate + H2O = a ribonucleoside 5'-diphosphate + phosphate + H(+). The enzyme catalyses a ribonucleoside 5'-diphosphate + H2O = a ribonucleoside 5'-phosphate + phosphate + H(+). Its function is as follows. Has nucleoside phosphatase activity towards nucleoside triphosphates and nucleoside diphosphates. This Streptococcus uberis (strain ATCC BAA-854 / 0140J) protein is Nucleoside triphosphate/diphosphate phosphatase.